Consider the following 223-residue polypeptide: Triosephosphate isomerase (223 aa).

Substrate is bound at residue 6–8 (NLK). Histidine 86 serves as the catalytic Electrophile. Catalysis depends on glutamate 151, which acts as the Proton acceptor. Substrate is bound by residues glycine 157 and serine 187.

This sequence belongs to the triosephosphate isomerase family. Homodimer.

It is found in the cytoplasm. It carries out the reaction D-glyceraldehyde 3-phosphate = dihydroxyacetone phosphate. It functions in the pathway carbohydrate biosynthesis; gluconeogenesis. It participates in carbohydrate degradation; glycolysis; D-glyceraldehyde 3-phosphate from glycerone phosphate: step 1/1. Functionally, involved in the gluconeogenesis. Catalyzes stereospecifically the conversion of dihydroxyacetone phosphate (DHAP) to D-glyceraldehyde-3-phosphate (G3P). The polypeptide is Triosephosphate isomerase (Campylobacter jejuni subsp. doylei (strain ATCC BAA-1458 / RM4099 / 269.97)).